The following is a 341-amino-acid chain: Ketol-acid reductoisomerase (NADP(+)) (341 aa).

Residues 1-182 (MTEMFYDDDA…GGTRAGVIKT (182 aa)) form the KARI N-terminal Rossmann domain. NADP(+) is bound by residues 25-28 (YGSQ), lysine 48, serine 51, serine 53, and 83-86 (DQHQ). The active site involves histidine 108. Glycine 134 serves as a coordination point for NADP(+). One can recognise a KARI C-terminal knotted domain in the interval 183 to 328 (TFTEETETDL…RELRSLFSWQ (146 aa)). Mg(2+) contacts are provided by aspartate 191, glutamate 195, glutamate 227, and glutamate 231. Serine 252 provides a ligand contact to substrate.

This sequence belongs to the ketol-acid reductoisomerase family. The cofactor is Mg(2+).

The enzyme catalyses (2R)-2,3-dihydroxy-3-methylbutanoate + NADP(+) = (2S)-2-acetolactate + NADPH + H(+). It carries out the reaction (2R,3R)-2,3-dihydroxy-3-methylpentanoate + NADP(+) = (S)-2-ethyl-2-hydroxy-3-oxobutanoate + NADPH + H(+). It participates in amino-acid biosynthesis; L-isoleucine biosynthesis; L-isoleucine from 2-oxobutanoate: step 2/4. The protein operates within amino-acid biosynthesis; L-valine biosynthesis; L-valine from pyruvate: step 2/4. Involved in the biosynthesis of branched-chain amino acids (BCAA). Catalyzes an alkyl-migration followed by a ketol-acid reduction of (S)-2-acetolactate (S2AL) to yield (R)-2,3-dihydroxy-isovalerate. In the isomerase reaction, S2AL is rearranged via a Mg-dependent methyl migration to produce 3-hydroxy-3-methyl-2-ketobutyrate (HMKB). In the reductase reaction, this 2-ketoacid undergoes a metal-dependent reduction by NADPH to yield (R)-2,3-dihydroxy-isovalerate. In Pseudarthrobacter chlorophenolicus (strain ATCC 700700 / DSM 12829 / CIP 107037 / JCM 12360 / KCTC 9906 / NCIMB 13794 / A6) (Arthrobacter chlorophenolicus), this protein is Ketol-acid reductoisomerase (NADP(+)).